Consider the following 129-residue polypeptide: Putative reactive intermediate deaminase TdcF (129 aa).

K58 is modified (N6-(pyridoxal phosphate)lysine). Substrate-binding positions include 105-107 (RSC) and E120.

This sequence belongs to the RutC family. As to quaternary structure, homotrimer.

It participates in amino-acid degradation; L-threonine degradation via propanoate pathway. May be a post-translational regulator that controls the metabolic fate of L-threonine or the potentially toxic intermediate 2-ketobutyrate. The protein is Putative reactive intermediate deaminase TdcF (tdcF) of Escherichia coli O6:H1 (strain CFT073 / ATCC 700928 / UPEC).